A 250-amino-acid chain; its full sequence is Tripartite motif-containing protein 73 (250 aa).

The RING-type zinc-finger motif lies at 16–57 (CPICLEVFKESLMLQCGHSYCKGCLVSLSYHLDTKVRCPMCW). The B box-type zinc-finger motif lies at 84 to 125 (PEPKVCVHHRNPLSLFCEKDQELICGLCGLLGSHQHHPVTPV). Zn(2+) contacts are provided by Cys89, His92, Cys111, and His117. 2 coiled-coil regions span residues 125–169 (VSTV…NESD) and 204–235 (LVAS…FGNE).

The protein belongs to the TRIM/RBCC family.

The sequence is that of Tripartite motif-containing protein 73 (TRIM73) from Homo sapiens (Human).